The chain runs to 138 residues: Large ribosomal subunit protein uL13 (138 aa).

It belongs to the universal ribosomal protein uL13 family. Part of the 50S ribosomal subunit.

Functionally, this protein is one of the early assembly proteins of the 50S ribosomal subunit, although it is not seen to bind rRNA by itself. It is important during the early stages of 50S assembly. This chain is Large ribosomal subunit protein uL13, found in Picrophilus torridus (strain ATCC 700027 / DSM 9790 / JCM 10055 / NBRC 100828 / KAW 2/3).